The chain runs to 369 residues: Endophilin-A (369 aa).

The BAR domain maps to 18-248; it reads TEKMGGAEGT…LQEKRAEAES (231 aa). Positions 227-249 form a coiled coil; the sequence is QCADVLRGLQETLQEKRAEAESR. Over residues 275–294 the composition is skewed to low complexity; sequence GTPSHISSSASPLPSPMRSP. The disordered stretch occupies residues 275-297; that stretch reads GTPSHISSSASPLPSPMRSPAKS. Residues 305–364 enclose the SH3 domain; that stretch reads QQQPCCQALYDFDPENPGELGFKENDIITLLNRVDDNWYEGAVNGRTGYFPQSYVQVQVP.

Belongs to the endophilin family.

It is found in the cytoplasm. The protein resides in the membrane. Functionally, required presynaptically at the neuromuscular junction. Implicated in synaptic vesicle endocytosis. The polypeptide is Endophilin-A (Drosophila virilis (Fruit fly)).